We begin with the raw amino-acid sequence, 193 residues long: ATP-dependent Clp protease proteolytic subunit 2 (193 aa).

Residue S98 is the Nucleophile of the active site. H123 is an active-site residue.

The protein belongs to the peptidase S14 family. As to quaternary structure, fourteen ClpP subunits assemble into 2 heptameric rings which stack back to back to give a disk-like structure with a central cavity, resembling the structure of eukaryotic proteasomes.

It localises to the cytoplasm. The catalysed reaction is Hydrolysis of proteins to small peptides in the presence of ATP and magnesium. alpha-casein is the usual test substrate. In the absence of ATP, only oligopeptides shorter than five residues are hydrolyzed (such as succinyl-Leu-Tyr-|-NHMec, and Leu-Tyr-Leu-|-Tyr-Trp, in which cleavage of the -Tyr-|-Leu- and -Tyr-|-Trp bonds also occurs).. Its function is as follows. Cleaves peptides in various proteins in a process that requires ATP hydrolysis. Has a chymotrypsin-like activity. Plays a major role in the degradation of misfolded proteins. This Bacillus cereus (strain ATCC 10987 / NRS 248) protein is ATP-dependent Clp protease proteolytic subunit 2.